The chain runs to 1040 residues: Multidrug resistance protein MdtB (1040 aa).

Helical transmembrane passes span F16 to I36, L347 to A367, I369 to L389, L396 to I416, I440 to F460, F472 to P492, W537 to I557, L863 to I883, F888 to A908, I911 to V931, I968 to V988, and I998 to I1018.

It belongs to the resistance-nodulation-cell division (RND) (TC 2.A.6) family. MdtB subfamily. As to quaternary structure, part of a tripartite efflux system composed of MdtA, MdtB and MdtC. MdtB forms a heteromultimer with MdtC.

It is found in the cell inner membrane. Its function is as follows. The MdtABC tripartite complex confers resistance against novobiocin and deoxycholate. The chain is Multidrug resistance protein MdtB from Escherichia coli (strain SE11).